The chain runs to 550 residues: Neuronal acetylcholine receptor subunit alpha-9-II (550 aa).

An N-terminal signal peptide occupies residues methionine 1–serine 20. The Extracellular segment spans residues alanine 21–serine 233. The N-linked (GlcNAc...) asparagine glycan is linked to asparagine 52. A disulfide bond links cysteine 150 and cysteine 164. N-linked (GlcNAc...) asparagine glycosylation is present at asparagine 165. Residues cysteine 214 and cysteine 215 are joined by a disulfide bond. The next 3 membrane-spanning stretches (helical) occupy residues phenylalanine 234 to phenylalanine 254, valine 264 to serine 284, and tyrosine 298 to isoleucine 318. The Cytoplasmic portion of the chain corresponds to histidine 319–arginine 528. The segment at threonine 357–phenylalanine 439 is disordered. The span at serine 358–serine 367 shows a compositional bias: low complexity. Residues arginine 413 to histidine 422 show a composition bias toward basic residues. A helical transmembrane segment spans residues phenylalanine 529–alanine 549.

This sequence belongs to the ligand-gated ion channel (TC 1.A.9) family. Acetylcholine receptor (TC 1.A.9.1) subfamily. As to expression, expressed in the brain, liver, olfactory mucosa, pituitary gland and hair cells of the saccule.

It localises to the postsynaptic cell membrane. Its subcellular location is the cell membrane. In Oncorhynchus mykiss (Rainbow trout), this protein is Neuronal acetylcholine receptor subunit alpha-9-II.